A 599-amino-acid polypeptide reads, in one-letter code: Beta-(1--&gt;2)glucan export ATP-binding/permease protein NdvA (599 aa).

Residues 21–301 (TITMCVASVL…ISAFINQTVT (281 aa)) form the ABC transmembrane type-1 domain. Helical transmembrane passes span 22–42 (ITMC…PVLF), 55–75 (IFSP…AAVF), 156–176 (MRMS…GQLV), 248–268 (MAST…VTKG), and 276–296 (IAFI…SAFI). One can recognise an ABC transporter domain in the interval 335–569 (IVFDNVTFEF…GGRFSDLLRA (235 aa)). 368–375 (GPTGAGKT) provides a ligand contact to ATP.

This sequence belongs to the ABC transporter superfamily. Beta-(1--&gt;2)glucan exporter (TC 3.A.1.108.1) family. As to quaternary structure, homodimer.

It localises to the cell inner membrane. It carries out the reaction [(1-&gt;2)-beta-D-glucosyl](n)(in) + ATP + H2O = [(1-&gt;2)-beta-D-glucosyl](n)(out) + ADP + phosphate + H(+). Its function is as follows. Involved in beta-(1--&gt;2)glucan export. Transmembrane domains (TMD) form a pore in the inner membrane and the ATP-binding domain (NBD) is responsible for energy generation. This is Beta-(1--&gt;2)glucan export ATP-binding/permease protein NdvA from Brucella suis biovar 1 (strain 1330).